The sequence spans 229 residues: MRFLTVDVGNSSVDIALWEGKKVKDFLKLSHEEFLKEEFPKLKALGISVKQSFSEKVRGKIPKIKFLKKENFPIQVDYKTPETLGTDRVALAYSAKKFYGKNVVVISAGTALVIDLVLEGKFKGGFITLGLGKKLKILSDLAEGIPEFFPEEVEIFLGRSTRECVLGGAYRESTEFIKSTLKLWRKVFKRKFKVVITGGEGKYFSKFGIYDPLLVHRGMRNLLYLYHRI.

An ATP-binding site is contributed by 7-14; that stretch reads DVGNSSVD. Substrate-binding positions include Y78 and 85-88; that span reads GTDR. D87 acts as the Proton acceptor in catalysis. T110 contacts ATP. T161 contacts substrate.

This sequence belongs to the type III pantothenate kinase family. Homodimer. NH4(+) is required as a cofactor. K(+) serves as cofactor.

It localises to the cytoplasm. It carries out the reaction (R)-pantothenate + ATP = (R)-4'-phosphopantothenate + ADP + H(+). It functions in the pathway cofactor biosynthesis; coenzyme A biosynthesis; CoA from (R)-pantothenate: step 1/5. Functionally, catalyzes the phosphorylation of pantothenate (Pan), the first step in CoA biosynthesis. The protein is Type III pantothenate kinase of Aquifex aeolicus (strain VF5).